The sequence spans 210 residues: Probable GTP-binding protein EngB (210 aa).

An EngB-type G domain is found at 25 to 199 (CGIEVAFAGR…RQKLDSWFSE (175 aa)). Residues 33–40 (GRSNAGKS), 60–64 (GRTQL), 78–81 (DLPG), 145–148 (TKAD), and 178–180 (FSS) each bind GTP. Positions 40 and 62 each coordinate Mg(2+).

It belongs to the TRAFAC class TrmE-Era-EngA-EngB-Septin-like GTPase superfamily. EngB GTPase family. It depends on Mg(2+) as a cofactor.

Its function is as follows. Necessary for normal cell division and for the maintenance of normal septation. This chain is Probable GTP-binding protein EngB, found in Salmonella agona (strain SL483).